The sequence spans 366 residues: UDP-N-acetylglucosamine--N-acetylmuramyl-(pentapeptide) pyrophosphoryl-undecaprenol N-acetylglucosamine transferase (366 aa).

UDP-N-acetyl-alpha-D-glucosamine-binding positions include 17-19 (TGG), Asn129, Arg169, Ser195, Ile251, 270-275 (ALTVSE), and Gln296.

The protein belongs to the glycosyltransferase 28 family. MurG subfamily.

It localises to the cell inner membrane. It catalyses the reaction di-trans,octa-cis-undecaprenyl diphospho-N-acetyl-alpha-D-muramoyl-L-alanyl-D-glutamyl-meso-2,6-diaminopimeloyl-D-alanyl-D-alanine + UDP-N-acetyl-alpha-D-glucosamine = di-trans,octa-cis-undecaprenyl diphospho-[N-acetyl-alpha-D-glucosaminyl-(1-&gt;4)]-N-acetyl-alpha-D-muramoyl-L-alanyl-D-glutamyl-meso-2,6-diaminopimeloyl-D-alanyl-D-alanine + UDP + H(+). It functions in the pathway cell wall biogenesis; peptidoglycan biosynthesis. In terms of biological role, cell wall formation. Catalyzes the transfer of a GlcNAc subunit on undecaprenyl-pyrophosphoryl-MurNAc-pentapeptide (lipid intermediate I) to form undecaprenyl-pyrophosphoryl-MurNAc-(pentapeptide)GlcNAc (lipid intermediate II). The protein is UDP-N-acetylglucosamine--N-acetylmuramyl-(pentapeptide) pyrophosphoryl-undecaprenol N-acetylglucosamine transferase of Shewanella denitrificans (strain OS217 / ATCC BAA-1090 / DSM 15013).